Here is a 283-residue protein sequence, read N- to C-terminus: Splicing factor U2af small subunit B (283 aa).

The C3H1-type 1 zinc-finger motif lies at 12-40; it reads EKDRVNCPFYFKIGACRHGDRCSRLHNRP. The 103-residue stretch at 44–146 folds into the RRM domain; that stretch reads PTLLLSNMYQ…RPIIADFSPV (103 aa). The C3H1-type 2 zinc finger occupies 148-175; it reads DFREATCRQYEENSCNRGGYCNFMHVKQ. A compositionally biased stretch (basic residues) spans 191–210; sequence SYRRGSRSRSRSISPRRKRE. Positions 191 to 283 are disordered; it reads SYRRGSRSRS…QWNRERDEGV (93 aa). Over residues 211-245 the composition is skewed to basic and acidic residues; sequence HSRERERGDVRDRDRHGNGKRSSDRSERHDRDGGG. Residues 246–259 show a composition bias toward basic residues; that stretch reads RRRHGSPKRSRSPR. Positions 260–283 are enriched in basic and acidic residues; sequence NVREGSEERRARIEQWNRERDEGV.

Belongs to the splicing factor SR family. In terms of assembly, component of the spliceosome. Homo- and heterodimer. Interacts with RNU1, U2AF35A and SR45.

The protein localises to the nucleus speckle. Necessary for the splicing of pre-mRNA. Probably active at the 3' splice sites. This is Splicing factor U2af small subunit B (U2AF35B) from Arabidopsis thaliana (Mouse-ear cress).